We begin with the raw amino-acid sequence, 448 residues long: Gametocyte surface protein P45/48 (448 aa).

Residues 1 to 27 (MMLYISAKKAQVAFILYIVLVLRIISG) form the signal peptide. The 6-Cys 1 domain maps to 45–182 (IGYKCNFSNE…AMVHVRVLKY (138 aa)). 2 cysteine pairs are disulfide-bonded: Cys-49–Cys-71 and Cys-102–Cys-156. 7 N-linked (GlcNAc...) asparagine glycosylation sites follow: Asn-50, Asn-131, Asn-190, Asn-204, Asn-254, Asn-299, and Asn-303. In terms of domain architecture, 6-Cys 2 spans 294-426 (VIHGCNFSSN…KSAYMTVTID (133 aa)). 3 cysteine pairs are disulfide-bonded: Cys-298–Cys-327, Cys-344–Cys-412, and Cys-352–Cys-410. Asp-426 carries the GPI-anchor amidated aspartate lipid modification. Positions 427-448 (SAYYGFLAKTFIFLIVAILLYI) are cleaved as a propeptide — removed in mature form.

In terms of assembly, heterodimer; heterodimerizes with PF230.

It is found in the cell surface. Its subcellular location is the cell membrane. Functionally, gametocyte surface protein required for male fertility. This is Gametocyte surface protein P45/48 (PF45/48) from Plasmodium falciparum (isolate 3D7).